We begin with the raw amino-acid sequence, 463 residues long: Asparagine--tRNA ligase (463 aa).

It belongs to the class-II aminoacyl-tRNA synthetase family. Homodimer.

The protein localises to the cytoplasm. It catalyses the reaction tRNA(Asn) + L-asparagine + ATP = L-asparaginyl-tRNA(Asn) + AMP + diphosphate + H(+). This Bacillus thuringiensis subsp. konkukian (strain 97-27) protein is Asparagine--tRNA ligase.